A 488-amino-acid chain; its full sequence is ATP synthase subunit beta (488 aa).

An ATP-binding site is contributed by Gly-164–Thr-171.

It belongs to the ATPase alpha/beta chains family. F-type ATPases have 2 components, CF(1) - the catalytic core - and CF(0) - the membrane proton channel. CF(1) has five subunits: alpha(3), beta(3), gamma(1), delta(1), epsilon(1). CF(0) has four main subunits: a(1), b(1), b'(1) and c(9-12).

The protein resides in the cellular thylakoid membrane. It catalyses the reaction ATP + H2O + 4 H(+)(in) = ADP + phosphate + 5 H(+)(out). Produces ATP from ADP in the presence of a proton gradient across the membrane. The catalytic sites are hosted primarily by the beta subunits. The sequence is that of ATP synthase subunit beta from Prochlorococcus marinus (strain MIT 9211).